A 64-amino-acid chain; its full sequence is Large ribosomal subunit protein bL35 (64 aa).

Basic residues-rich tracts occupy residues 1-15 (MPKA…KRFR) and 23-42 (VRQK…KRTR). The interval 1-45 (MPKAKTHSGASKRFRTTGSGKVVRQKANRRHLLEHKPTKRTRRLD) is disordered.

Belongs to the bacterial ribosomal protein bL35 family.

This chain is Large ribosomal subunit protein bL35, found in Mycolicibacterium vanbaalenii (strain DSM 7251 / JCM 13017 / BCRC 16820 / KCTC 9966 / NRRL B-24157 / PYR-1) (Mycobacterium vanbaalenii).